The chain runs to 227 residues: UPF0758 protein llmg_1515 (227 aa).

Residues 103–225 (QVLSSKEYGM…YYSFRERDSN (123 aa)) form the MPN domain. Positions 174, 176, and 187 each coordinate Zn(2+). The short motif at 174–187 (HNHPSGNLQPSQAD) is the JAMM motif element.

This sequence belongs to the UPF0758 family.

The protein is UPF0758 protein llmg_1515 of Lactococcus lactis subsp. cremoris (strain MG1363).